The sequence spans 323 residues: Ribosomal RNA small subunit methyltransferase H (323 aa).

S-adenosyl-L-methionine contacts are provided by residues 44-46 (AGH), aspartate 64, tyrosine 91, aspartate 112, and glutamine 119.

This sequence belongs to the methyltransferase superfamily. RsmH family.

The protein localises to the cytoplasm. It carries out the reaction cytidine(1402) in 16S rRNA + S-adenosyl-L-methionine = N(4)-methylcytidine(1402) in 16S rRNA + S-adenosyl-L-homocysteine + H(+). Specifically methylates the N4 position of cytidine in position 1402 (C1402) of 16S rRNA. The protein is Ribosomal RNA small subunit methyltransferase H of Nitratidesulfovibrio vulgaris (strain ATCC 29579 / DSM 644 / CCUG 34227 / NCIMB 8303 / VKM B-1760 / Hildenborough) (Desulfovibrio vulgaris).